A 344-amino-acid chain; its full sequence is Uroporphyrinogen decarboxylase (344 aa).

Residues 23–27 (RQAGR), Asp-73, Tyr-149, Thr-204, and His-321 each bind substrate.

It belongs to the uroporphyrinogen decarboxylase family. In terms of assembly, homodimer.

The protein resides in the cytoplasm. The enzyme catalyses uroporphyrinogen III + 4 H(+) = coproporphyrinogen III + 4 CO2. Its pathway is porphyrin-containing compound metabolism; protoporphyrin-IX biosynthesis; coproporphyrinogen-III from 5-aminolevulinate: step 4/4. In terms of biological role, catalyzes the decarboxylation of four acetate groups of uroporphyrinogen-III to yield coproporphyrinogen-III. The chain is Uroporphyrinogen decarboxylase from Francisella tularensis subsp. novicida (strain U112).